Consider the following 529-residue polypeptide: Putative amidohydrolase YtcJ (529 aa).

The protein belongs to the metallo-dependent hydrolases superfamily.

The protein is Putative amidohydrolase YtcJ (ytcJ) of Bacillus subtilis (strain 168).